Here is a 271-residue protein sequence, read N- to C-terminus: Acyl-[acyl-carrier-protein]--UDP-N-acetylglucosamine O-acyltransferase (271 aa).

The protein belongs to the transferase hexapeptide repeat family. LpxA subfamily. In terms of assembly, homotrimer.

Its subcellular location is the cytoplasm. The enzyme catalyses a (3R)-hydroxyacyl-[ACP] + UDP-N-acetyl-alpha-D-glucosamine = a UDP-3-O-[(3R)-3-hydroxyacyl]-N-acetyl-alpha-D-glucosamine + holo-[ACP]. It participates in glycolipid biosynthesis; lipid IV(A) biosynthesis; lipid IV(A) from (3R)-3-hydroxytetradecanoyl-[acyl-carrier-protein] and UDP-N-acetyl-alpha-D-glucosamine: step 1/6. Involved in the biosynthesis of lipid A, a phosphorylated glycolipid that anchors the lipopolysaccharide to the outer membrane of the cell. This chain is Acyl-[acyl-carrier-protein]--UDP-N-acetylglucosamine O-acyltransferase, found in Agrobacterium fabrum (strain C58 / ATCC 33970) (Agrobacterium tumefaciens (strain C58)).